Consider the following 89-residue polypeptide: Small ribosomal subunit protein uS14A (89 aa).

This sequence belongs to the universal ribosomal protein uS14 family. In terms of assembly, part of the 30S ribosomal subunit. Contacts proteins S3 and S10.

Functionally, binds 16S rRNA, required for the assembly of 30S particles and may also be responsible for determining the conformation of the 16S rRNA at the A site. In Listeria monocytogenes serovar 1/2a (strain ATCC BAA-679 / EGD-e), this protein is Small ribosomal subunit protein uS14A.